The following is a 291-amino-acid chain: DNA repair protein RecO (291 aa).

Belongs to the RecO family.

Involved in DNA repair and RecF pathway recombination. This is DNA repair protein RecO from Cupriavidus pinatubonensis (strain JMP 134 / LMG 1197) (Cupriavidus necator (strain JMP 134)).